A 106-amino-acid polypeptide reads, in one-letter code: Small ribosomal subunit protein bS18 (106 aa).

Residues 1-41 (MAEEHSNQRSQTFNGERTNRPSRKPRGDGERRGRRQGGRRR) are disordered.

Belongs to the bacterial ribosomal protein bS18 family. In terms of assembly, part of the 30S ribosomal subunit. Forms a tight heterodimer with protein bS6.

In terms of biological role, binds as a heterodimer with protein bS6 to the central domain of the 16S rRNA, where it helps stabilize the platform of the 30S subunit. The protein is Small ribosomal subunit protein bS18 of Oenococcus oeni (strain ATCC BAA-331 / PSU-1).